The primary structure comprises 1007 residues: MNMPSWLIFLLTGWTFCGNFFACGGLDYDYPNYENEEEKNEAIDYKDPCKAVVFWGDIALDEEDLKMFHIDRTIDLTQHSNEKLGHTTGGLEEHDLSKKRGALYQLIERIRRFGSGQENTTANSQKVDNNQSGKSKKIRIPRAATSRTERIWPGGVIPYVIGGNFTGSQRAMFKQAMRHWEKHTCVTFIERTDEESYIVFTYRPCGCCSYVGRRGNGPQAISIGKNCDKFGIVVHELGHVIGFWHEHTRPDRDDHVTIIRENIQPGQEYNFLKMEPGEVHSLGESYDFDSIMHYARNTFSRGMFLDTILPSRDENGLRPPIGQRTRLSKGDIAQARKLYRCPACGETLQESTGNFSSPGFPNGYPSYTHCIWRISVTPGEKIVLNFTTMDLYKSSLCWYDYIEVRDGYWKKSPLLGRFCGDKLPDVLTSTDSRMWIEFRSSSNWVGKGFAAVYEAICGGEIHKDAGQIQSPNYPDDYRPLKECVWKITVAENYNVGLTFQAFEIERHDNCAYDYLEVRDGSSENSPLIGHFCGYDKPEDIRSTSNTLWMKFVSDGTVNKAGFAANFLKEEDECARPDNGGCEQRCVNTLGSYKCSCDPGYELAPDKKSCEAACGGLLTKLNGTITTPAWPKEYPPNKNCVWQVVAPSQYRISMKFDYFELEGNEVCKYDYVEVRSGLSSDSKLHGKFCGTEVPEVITSQFNNMRIEFKSDNTVSKKGFRAHFFSDKDECSKDNGGCQHECINTIGSYVCQCRNGFVLHDNKHDCKEAECEHRIHSSNGVITSPNWPDKYPSRKECTWEISATPGHRVKLSFSEFEIEQHQECAYDHLEVFDGETEKSSILGRLCGSKVPEPLVATGNEMFIRFVSDASVQRKGFQATHSTECGGRLKAEAKPRDLFSHAQFGDNNYPVQADCEWILMTERGLRIELNFQTFEVEEEADCGYDFMELFDGHDASAMRLGRFCGSGPPEEIVSTGDAVLIHFHTDDTISKKGFHIRYRSVKYQDILHTK.

A signal peptide spans 1–25; sequence MNMPSWLIFLLTGWTFCGNFFACGG. A propeptide spanning residues 26-142 is cleaved from the precursor; that stretch reads LDYDYPNYEN…GKSKKIRIPR (117 aa). Residues 115–139 form a disordered region; the sequence is SGQENTTANSQKVDNNQSGKSKKIR. A compositionally biased stretch (polar residues) spans 116-133; it reads GQENTTANSQKVDNNQSG. The region spanning 143 to 342 is the Peptidase M12A domain; it reads AATSRTERIW…AQARKLYRCP (200 aa). An N-linked (GlcNAc...) asparagine glycan is attached at N164. 4 cysteine pairs are disulfide-bonded: C185–C341, C205–C227, C207–C208, and C344–C370. Position 235 (H235) interacts with Zn(2+). Residue E236 is part of the active site. Residues H239 and H245 each contribute to the Zn(2+) site. CUB domains are found at residues 344–456 and 457–569; these read CGET…YEAI and CGGE…FLKE. N354 and N385 each carry an N-linked (GlcNAc...) asparagine glycan. 15 disulfide bridges follow: C397/C419, C457/C483, C510/C532, C573/C585, C581/C594, C596/C609, C613/C639, C666/C688, C729/C740, C736/C749, C751/C764, C769/C795, C822/C844, C882/C912, and C939/C961. Positions 569–610 constitute an EGF-like 1; calcium-binding domain; that stretch reads EEDECARPDNGGCEQRCVNTLGSYKCSCDPGYELAPDKKSCE. Residues 613–725 form the CUB 3 domain; sequence CGGLLTKLNG…KGFRAHFFSD (113 aa). N621 carries N-linked (GlcNAc...) asparagine glycosylation. In terms of domain architecture, EGF-like 2; calcium-binding spans 725 to 765; the sequence is DKDECSKDNGGCQHECINTIGSYVCQCRNGFVLHDNKHDCK. CUB domains follow at residues 769-881 and 882-998; these read CEHR…HSTE and CGGR…YRSV.

Requires Zn(2+) as cofactor.

It localises to the secreted. Functionally, protease which processes procollagen C-propeptides, such as chordin. Required for the embryonic development. Predominant protease, which in the development, influences dorsal-ventral patterning and skeletogenesis. In Xenopus laevis (African clawed frog), this protein is Tolloid-like protein 1 (tll1).